The following is a 363-amino-acid chain: Phosphoserine aminotransferase (363 aa).

Arg-42 serves as a coordination point for L-glutamate. Pyridoxal 5'-phosphate is bound by residues Gly-76–Arg-77, Trp-102, Thr-156, Asp-175, and Gln-198. Lys-199 bears the N6-(pyridoxal phosphate)lysine mark. A pyridoxal 5'-phosphate-binding site is contributed by Asn-240–Thr-241.

This sequence belongs to the class-V pyridoxal-phosphate-dependent aminotransferase family. SerC subfamily. Homodimer. Pyridoxal 5'-phosphate serves as cofactor.

The protein localises to the cytoplasm. The enzyme catalyses O-phospho-L-serine + 2-oxoglutarate = 3-phosphooxypyruvate + L-glutamate. The catalysed reaction is 4-(phosphooxy)-L-threonine + 2-oxoglutarate = (R)-3-hydroxy-2-oxo-4-phosphooxybutanoate + L-glutamate. It participates in amino-acid biosynthesis; L-serine biosynthesis; L-serine from 3-phospho-D-glycerate: step 2/3. It functions in the pathway cofactor biosynthesis; pyridoxine 5'-phosphate biosynthesis; pyridoxine 5'-phosphate from D-erythrose 4-phosphate: step 3/5. Its function is as follows. Catalyzes the reversible conversion of 3-phosphohydroxypyruvate to phosphoserine and of 3-hydroxy-2-oxo-4-phosphonooxybutanoate to phosphohydroxythreonine. The sequence is that of Phosphoserine aminotransferase from Shewanella baltica (strain OS223).